The sequence spans 315 residues: Putative serine/threonine-protein phosphatase PP2A-4 catalytic subunit (315 aa).

Mn(2+)-binding residues include D63, H65, D91, and N123. The active-site Proton donor is H124. Residues H173 and H247 each coordinate Mn(2+).

This sequence belongs to the PPP phosphatase family. PP-2A subfamily. The cofactor is Mn(2+).

Its subcellular location is the cytoplasm. It catalyses the reaction O-phospho-L-seryl-[protein] + H2O = L-seryl-[protein] + phosphate. It carries out the reaction O-phospho-L-threonyl-[protein] + H2O = L-threonyl-[protein] + phosphate. This is Putative serine/threonine-protein phosphatase PP2A-4 catalytic subunit (PP2A4) from Oryza sativa subsp. indica (Rice).